The following is a 43-amino-acid chain: Protein PsbN (43 aa).

The chain crosses the membrane as a helical span at residues T5–F27.

This sequence belongs to the PsbN family.

It is found in the plastid. The protein resides in the chloroplast thylakoid membrane. Functionally, may play a role in photosystem I and II biogenesis. This chain is Protein PsbN, found in Chlorokybus atmophyticus (Soil alga).